The sequence spans 294 residues: Cytosolic Fe-S cluster assembly factor CFD1 (294 aa).

Position 25–32 (25–32) interacts with ATP; it reads GKGGVGKS. Cysteine 214 and cysteine 217 together coordinate [4Fe-4S] cluster.

This sequence belongs to the Mrp/NBP35 ATP-binding proteins family. NUBP2/CFD1 subfamily. In terms of assembly, heterotetramer of 2 NBP35 and 2 CFD1 chains. [4Fe-4S] cluster serves as cofactor.

It is found in the cytoplasm. Component of the cytosolic iron-sulfur (Fe/S) protein assembly (CIA) machinery. Required for maturation of extramitochondrial Fe-S proteins. The NBP35-CFD1 heterotetramer forms a Fe-S scaffold complex, mediating the de novo assembly of an Fe-S cluster and its transfer to target apoproteins. Required for biogenesis and export of both ribosomal subunits, which may reflect a role in assembly of the Fe/S clusters in RLI1, a protein which performs rRNA processing and ribosome export. The chain is Cytosolic Fe-S cluster assembly factor CFD1 from Candida albicans (strain SC5314 / ATCC MYA-2876) (Yeast).